A 210-amino-acid chain; its full sequence is Uracil phosphoribosyltransferase (210 aa).

5-phospho-alpha-D-ribose 1-diphosphate is bound by residues arginine 80, arginine 105, and 132-140 (DPMLATGGS). Uracil contacts are provided by residues isoleucine 195 and 200–202 (GDA). 5-phospho-alpha-D-ribose 1-diphosphate is bound at residue aspartate 201.

It belongs to the UPRTase family. Mg(2+) is required as a cofactor.

The enzyme catalyses UMP + diphosphate = 5-phospho-alpha-D-ribose 1-diphosphate + uracil. It functions in the pathway pyrimidine metabolism; UMP biosynthesis via salvage pathway; UMP from uracil: step 1/1. Allosterically activated by GTP. Functionally, catalyzes the conversion of uracil and 5-phospho-alpha-D-ribose 1-diphosphate (PRPP) to UMP and diphosphate. This chain is Uracil phosphoribosyltransferase, found in Caldanaerobacter subterraneus subsp. tengcongensis (strain DSM 15242 / JCM 11007 / NBRC 100824 / MB4) (Thermoanaerobacter tengcongensis).